Here is a 336-residue protein sequence, read N- to C-terminus: Phenylalanine--tRNA ligase alpha subunit (336 aa).

Glu255 is a Mg(2+) binding site.

Belongs to the class-II aminoacyl-tRNA synthetase family. Phe-tRNA synthetase alpha subunit type 1 subfamily. As to quaternary structure, tetramer of two alpha and two beta subunits. The cofactor is Mg(2+).

It is found in the cytoplasm. It carries out the reaction tRNA(Phe) + L-phenylalanine + ATP = L-phenylalanyl-tRNA(Phe) + AMP + diphosphate + H(+). This is Phenylalanine--tRNA ligase alpha subunit from Gemmatimonas aurantiaca (strain DSM 14586 / JCM 11422 / NBRC 100505 / T-27).